We begin with the raw amino-acid sequence, 135 residues long: Large ribosomal subunit protein uL16c (135 aa).

Positions 1–23 are enriched in basic residues; that stretch reads MLSPKKTKFRKEHRGRMKGRSSR. Residues 1–24 are disordered; the sequence is MLSPKKTKFRKEHRGRMKGRSSRG.

This sequence belongs to the universal ribosomal protein uL16 family. In terms of assembly, part of the 50S ribosomal subunit.

The protein resides in the plastid. Its subcellular location is the chloroplast. In Pelargonium hortorum (Common geranium), this protein is Large ribosomal subunit protein uL16c.